Reading from the N-terminus, the 182-residue chain is NADH-quinone oxidoreductase subunit I (182 aa).

4Fe-4S ferredoxin-type domains are found at residues 52 to 82 (LTRDPDGEERCVACNLCAVACPVGCISLQKA) and 92 to 121 (EFFRINFSRCIFCGLCEEACPTTAIQLTPD). 8 residues coordinate [4Fe-4S] cluster: Cys62, Cys65, Cys68, Cys72, Cys101, Cys104, Cys107, and Cys111.

This sequence belongs to the complex I 23 kDa subunit family. As to quaternary structure, NDH-1 is composed of 13 different subunits. Subunits NuoA, H, J, K, L, M, N constitute the membrane sector of the complex. [4Fe-4S] cluster is required as a cofactor.

Its subcellular location is the cell inner membrane. The catalysed reaction is a quinone + NADH + 5 H(+)(in) = a quinol + NAD(+) + 4 H(+)(out). In terms of biological role, NDH-1 shuttles electrons from NADH, via FMN and iron-sulfur (Fe-S) centers, to quinones in the respiratory chain. The immediate electron acceptor for the enzyme in this species is believed to be ubiquinone. Couples the redox reaction to proton translocation (for every two electrons transferred, four hydrogen ions are translocated across the cytoplasmic membrane), and thus conserves the redox energy in a proton gradient. The protein is NADH-quinone oxidoreductase subunit I of Pseudomonas putida (strain ATCC 47054 / DSM 6125 / CFBP 8728 / NCIMB 11950 / KT2440).